A 217-amino-acid chain; its full sequence is Cytidylate kinase (217 aa).

An ATP-binding site is contributed by 10–18 (GPAGAGKST).

This sequence belongs to the cytidylate kinase family. Type 1 subfamily.

It is found in the cytoplasm. It carries out the reaction CMP + ATP = CDP + ADP. The enzyme catalyses dCMP + ATP = dCDP + ADP. The protein is Cytidylate kinase of Clostridium botulinum (strain Okra / Type B1).